A 366-amino-acid chain; its full sequence is UDP-N-acetylglucosamine--N-acetylmuramyl-(pentapeptide) pyrophosphoryl-undecaprenol N-acetylglucosamine transferase (366 aa).

UDP-N-acetyl-alpha-D-glucosamine is bound by residues 15 to 17, Asn127, Arg175, Ser201, Ile255, and Gln300; that span reads TGG.

This sequence belongs to the glycosyltransferase 28 family. MurG subfamily.

Its subcellular location is the cell inner membrane. It catalyses the reaction di-trans,octa-cis-undecaprenyl diphospho-N-acetyl-alpha-D-muramoyl-L-alanyl-D-glutamyl-meso-2,6-diaminopimeloyl-D-alanyl-D-alanine + UDP-N-acetyl-alpha-D-glucosamine = di-trans,octa-cis-undecaprenyl diphospho-[N-acetyl-alpha-D-glucosaminyl-(1-&gt;4)]-N-acetyl-alpha-D-muramoyl-L-alanyl-D-glutamyl-meso-2,6-diaminopimeloyl-D-alanyl-D-alanine + UDP + H(+). It functions in the pathway cell wall biogenesis; peptidoglycan biosynthesis. Its function is as follows. Cell wall formation. Catalyzes the transfer of a GlcNAc subunit on undecaprenyl-pyrophosphoryl-MurNAc-pentapeptide (lipid intermediate I) to form undecaprenyl-pyrophosphoryl-MurNAc-(pentapeptide)GlcNAc (lipid intermediate II). The protein is UDP-N-acetylglucosamine--N-acetylmuramyl-(pentapeptide) pyrophosphoryl-undecaprenol N-acetylglucosamine transferase of Thiobacillus denitrificans (strain ATCC 25259 / T1).